A 1493-amino-acid polypeptide reads, in one-letter code: Mitogen-activated protein kinase kinase kinase 1 (1493 aa).

Positions 1–23 (MAAAAGDRASSSGFPGAAAASPE) are enriched in low complexity. 2 disordered regions span residues 1–178 (MAAA…PEER) and 194–300 (HEWL…EETS). Position 2 is an N-acetylalanine (A2). S21 is subject to Phosphoserine. Over residues 24-35 (AGGGGGGGGALQ) the composition is skewed to gly residues. A compositionally biased stretch (low complexity) spans 36 to 46 (GSGAPAAGAAG). A compositionally biased stretch (pro residues) spans 89 to 99 (PPCPSTSPSPE). The segment covering 140-156 (ARSPAGAEPPSAAAPSG) has biased composition (low complexity). Phosphoserine is present on S142. Residues 157-178 (REMENKETLKGLHKMEDRPEER) are compositionally biased toward basic and acidic residues. The segment covering 235–256 (SAAPAPKGRRSPSPGSSPSGRS) has biased composition (low complexity). Position 270 is a phosphoserine (S270). T280 is modified (phosphothreonine). Residues S287, S292, and S295 each carry the phosphoserine modification. The segment at 333-361 (YRVFIGPQNCSCGRGAFCIHLLFVMLRVF) adopts an SWIM-type zinc-finger fold. A compositionally biased stretch (low complexity) spans 411–428 (SNSHTLSSSSTSTSSSEN). A disordered region spans residues 411–431 (SNSHTLSSSSTSTSSSENSIK). Residues 438 to 487 (CPICLLGMLDEESLTVCEDGCRNKLHHHCMSIWAEECRRNREPLICPLCR) form an RING-type zinc finger. A phosphoserine mark is found at S502 and S526. Disordered stretches follow at residues 506 to 531 (SPAS…RRNQ) and 895 to 914 (EHTV…RLSA). Over residues 512-527 (AVQQPSSPQQPVAGSQ) the composition is skewed to low complexity. S915 is modified (phosphoserine). Disordered stretches follow at residues 927-957 (SVGL…LNSS) and 992-1066 (PCKI…TLDL). Positions 998–1013 (ASPQTQRKFSLQFQRN) are enriched in polar residues. A phosphoserine mark is found at S999 and S1024. Over residues 1049–1063 (GSTSKLGDATKSSMT) the composition is skewed to polar residues. Residues 1224–1489 (WLKGQQIGLG…SRELLKHPVF (266 aa)) enclose the Protein kinase domain. Residues 1230–1238 (IGLGAFSSC) and K1253 contribute to the ATP site. D1350 functions as the Proton acceptor in the catalytic mechanism. Phosphothreonine; by autocatalysis is present on residues T1381 and T1393.

The protein belongs to the protein kinase superfamily. STE Ser/Thr protein kinase family. MAP kinase kinase kinase subfamily. As to quaternary structure, binds both upstream activators and downstream substrates in multimolecular complexes through its N-terminus. Oligomerizes after binding MAP4K2 or TRAF2. Interacts with AXIN1. Interacts (via the kinase catalytic domain) with STK38. Interacts with GRIPAP1. The cofactor is Mg(2+). Post-translationally, autophosphorylated. Highly expressed in the heart and spleen while a lower level expression is seen in the liver.

The enzyme catalyses L-seryl-[protein] + ATP = O-phospho-L-seryl-[protein] + ADP + H(+). It catalyses the reaction L-threonyl-[protein] + ATP = O-phospho-L-threonyl-[protein] + ADP + H(+). Its activity is regulated as follows. Activated by autophosphorylation on Thr-1381 and Thr-1393 following oligomerization. In terms of biological role, component of a protein kinase signal transduction cascade. Activates the ERK and JNK kinase pathways by phosphorylation of MAP2K1 and MAP2K4. May phosphorylate the MAPK8/JNK1 kinase. Activates CHUK and IKBKB, the central protein kinases of the NF-kappa-B pathway. This Mus musculus (Mouse) protein is Mitogen-activated protein kinase kinase kinase 1 (Map3k1).